The following is a 365-amino-acid chain: S-adenosylmethionine:tRNA ribosyltransferase-isomerase (365 aa).

Belongs to the QueA family. As to quaternary structure, monomer.

It localises to the cytoplasm. It carries out the reaction 7-aminomethyl-7-carbaguanosine(34) in tRNA + S-adenosyl-L-methionine = epoxyqueuosine(34) in tRNA + adenine + L-methionine + 2 H(+). It functions in the pathway tRNA modification; tRNA-queuosine biosynthesis. Functionally, transfers and isomerizes the ribose moiety from AdoMet to the 7-aminomethyl group of 7-deazaguanine (preQ1-tRNA) to give epoxyqueuosine (oQ-tRNA). The protein is S-adenosylmethionine:tRNA ribosyltransferase-isomerase of Rickettsia rickettsii (strain Iowa).